The primary structure comprises 172 residues: Translationally-controlled tumor protein homolog (172 aa).

The TCTP domain maps to 1 to 172 (MKIYKDIITG…FKHGLDEEKC (172 aa)).

The protein belongs to the TCTP family.

Its subcellular location is the cytoplasm. In terms of biological role, involved in calcium binding and microtubule stabilization. The protein is Translationally-controlled tumor protein homolog of Drosophila yakuba (Fruit fly).